Consider the following 367-residue polypeptide: Glutamate 5-kinase (367 aa).

Position 10 (Lys10) interacts with ATP. The substrate site is built by Ser50, Asp137, and Asn149. Residues 169-170 (TD) and 211-217 (TGGMGTK) contribute to the ATP site. Positions 275-353 (AGEITVDDGA…QEISEILGYE (79 aa)) constitute a PUA domain.

It belongs to the glutamate 5-kinase family.

Its subcellular location is the cytoplasm. The catalysed reaction is L-glutamate + ATP = L-glutamyl 5-phosphate + ADP. The protein operates within amino-acid biosynthesis; L-proline biosynthesis; L-glutamate 5-semialdehyde from L-glutamate: step 1/2. Its activity is regulated as follows. Proline-mediated feedback inhibition. In terms of biological role, catalyzes the transfer of a phosphate group to glutamate to form L-glutamate 5-phosphate. In Serratia marcescens, this protein is Glutamate 5-kinase.